We begin with the raw amino-acid sequence, 1582 residues long: ATP-binding cassette sub-family C member 8 (1582 aa).

The Extracellular portion of the chain corresponds to Met-1–Ala-30. Residues Cys-6 and Cys-26 are joined by a disulfide bond. Asn-10 is a glycosylation site (N-linked (GlcNAc...) asparagine). The helical transmembrane segment at Leu-31–Leu-47 threads the bilayer. Over Phe-48–Asn-72 the chain is Cytoplasmic. The helical transmembrane segment at Leu-73–Ile-89 threads the bilayer. Residues Ala-90 to Leu-106 lie on the Extracellular side of the membrane. A helical transmembrane segment spans residues Tyr-107–Tyr-123. The Cytoplasmic portion of the chain corresponds to Tyr-124–Leu-136. A helical transmembrane segment spans residues Ile-137–Lys-153. Residues Phe-154–Phe-169 lie on the Extracellular side of the membrane. Residues Cys-170–Glu-186 form a helical membrane-spanning segment. At Val-187 to Ser-303 the chain is on the cytoplasmic side. Positions Leu-299–Lys-602 constitute an ABC transmembrane type-1 1 domain. The helical transmembrane segment at Thr-304–Cys-319 threads the bilayer. Over Ile-320–Tyr-356 the chain is Extracellular. A helical membrane pass occupies residues Val-357–Phe-372. Residues Leu-373–Leu-438 lie on the Cytoplasmic side of the membrane. Residues Trp-439 to Tyr-454 form a helical membrane-spanning segment. The Extracellular portion of the chain corresponds to Ile-455–Ala-460. The chain crosses the membrane as a helical span at residues Leu-461–Val-473. At Gln-474–Ser-541 the chain is on the cytoplasmic side. A helical membrane pass occupies residues Ile-542–Ile-557. Over Thr-558–Ala-576 the chain is Extracellular. The chain crosses the membrane as a helical span at residues Phe-577–Leu-592. The Cytoplasmic portion of the chain corresponds to Leu-593–Leu-1013. The ABC transporter 1 domain maps to Val-679–Thr-930. The ATP site is built by Trp-688, Gly-716, Ser-720, and Ser-721. Ser-720 contributes to the Mg(2+) binding site. The disordered stretch occupies residues Ser-741–Ser-766. Gln-775 contributes to the Mg(2+) binding site. Residues Leu-939–Ser-950 show a composition bias toward basic and acidic residues. The interval Leu-939 to Ser-962 is disordered. The 295-residue stretch at Leu-1013–Ile-1307 folds into the ABC transmembrane type-1 2 domain. The helical transmembrane segment at Ser-1014–Asp-1031 threads the bilayer. Residues Tyr-1032–Val-1067 are Extracellular-facing. N-linked (GlcNAc...) asparagine glycosylation is present at Asn-1050. The helical transmembrane segment at Phe-1068–Val-1084 threads the bilayer. Residues Thr-1085–Leu-1143 are Cytoplasmic-facing. Residues Ser-1144 to Thr-1161 form a helical membrane-spanning segment. Residue Pro-1162 is a topological domain, extracellular. The helical transmembrane segment at Val-1163 to Cys-1175 threads the bilayer. The Cytoplasmic portion of the chain corresponds to Tyr-1176–Glu-1249. The chain crosses the membrane as a helical span at residues Val-1250–Ala-1265. At Thr-1266–Val-1281 the chain is on the extracellular side. A helical membrane pass occupies residues Gly-1282–Trp-1297. Residues Met-1298 to Lys-1582 are Cytoplasmic-facing. The ABC transporter 2 domain occupies Ile-1345–Arg-1579. ADP is bound by residues Thr-1381, Gly-1382, Gly-1384, Lys-1385, Ser-1386, and Ser-1387. Ser-1483 contacts ATP.

Belongs to the ABC transporter superfamily. ABCC family. Conjugate transporter (TC 3.A.1.208) subfamily. In terms of assembly, forms an heterooctamer with KCNJ11; four ABCC8/SUR1 molecules interact with one KCNJ11 homotetramer.

It is found in the cell membrane. Its activity is regulated as follows. KATP channels are regulated by cytoplasmic ATP/ADP ratios; ATP inhibits the channel by closing the pore, while ADP activates the channel. Activated by phosphatidylinositol 4,5-biphosphate (PtdIns(4,5)P2). Its function is as follows. Regulator subunit of pancreatic ATP-sensitive potassium channel (KATP), playing a major role in the regulation of insulin release. In pancreatic cells, it forms KATP channels with KCNJ11; KCNJ11 forms the channel pore while ABCC8 is required for activation and regulation. In Cricetus cricetus (Black-bellied hamster), this protein is ATP-binding cassette sub-family C member 8 (ABCC8).